The following is a 230-amino-acid chain: Large ribosomal subunit protein uL1 (230 aa).

The protein belongs to the universal ribosomal protein uL1 family. As to quaternary structure, part of the 50S ribosomal subunit.

Binds directly to 23S rRNA. The L1 stalk is quite mobile in the ribosome, and is involved in E site tRNA release. Functionally, protein L1 is also a translational repressor protein, it controls the translation of the L11 operon by binding to its mRNA. This chain is Large ribosomal subunit protein uL1, found in Rhodopseudomonas palustris (strain BisA53).